Here is a 311-residue protein sequence, read N- to C-terminus: Dermonecrotic toxin (311 aa).

Positions M1–T21 are cleaved as a signal peptide. A propeptide spanning residues D22 to R26 is cleaved from the precursor. Residue H38 is part of the active site. Mg(2+)-binding residues include E58 and D60. H73 (nucleophile) is an active-site residue. Residues C77 and C83 are joined by a disulfide bond. D117 provides a ligand contact to Mg(2+).

This sequence belongs to the arthropod phospholipase D family. Class I subfamily. Mg(2+) serves as cofactor. Expressed by the venom gland.

It is found in the secreted. It catalyses the reaction an N-(acyl)-sphingosylphosphocholine = an N-(acyl)-sphingosyl-1,3-cyclic phosphate + choline. The catalysed reaction is an N-(acyl)-sphingosylphosphoethanolamine = an N-(acyl)-sphingosyl-1,3-cyclic phosphate + ethanolamine. The enzyme catalyses a 1-acyl-sn-glycero-3-phosphocholine = a 1-acyl-sn-glycero-2,3-cyclic phosphate + choline. It carries out the reaction a 1-acyl-sn-glycero-3-phosphoethanolamine = a 1-acyl-sn-glycero-2,3-cyclic phosphate + ethanolamine. Its activity is regulated as follows. Catalytic activity and hemolysis are inhibited by divalent ion chelators (1,10-phenanthroline, EDTA, and EGTA). Functionally, dermonecrotic toxins cleave the phosphodiester linkage between the phosphate and headgroup of certain phospholipids (sphingolipid and lysolipid substrates), forming an alcohol (often choline) and a cyclic phosphate. This toxin acts on sphingomyelin (SM). It may also act on ceramide phosphoethanolamine (CPE), lysophosphatidylcholine (LPC) and lysophosphatidylethanolamine (LPE), but not on lysophosphatidylserine (LPS), and lysophosphatidylglycerol (LPG). It acts by transphosphatidylation, releasing exclusively cyclic phosphate products as second products. Shows complement-dependent hemolysis. Also induces dermonecrosis, vascular permeability, edema, inflammatory response, and platelet aggregation. This is Dermonecrotic toxin from Loxosceles laeta (South American recluse spider).